The primary structure comprises 141 residues: D-aminoacyl-tRNA deacylase (141 aa).

Positions 133 to 134 (GP) match the Gly-cisPro motif, important for rejection of L-amino acids motif.

The protein belongs to the DTD family. As to quaternary structure, homodimer.

It is found in the cytoplasm. The enzyme catalyses glycyl-tRNA(Ala) + H2O = tRNA(Ala) + glycine + H(+). It catalyses the reaction a D-aminoacyl-tRNA + H2O = a tRNA + a D-alpha-amino acid + H(+). Its function is as follows. An aminoacyl-tRNA editing enzyme that deacylates mischarged D-aminoacyl-tRNAs. Also deacylates mischarged glycyl-tRNA(Ala), protecting cells against glycine mischarging by AlaRS. Acts via tRNA-based rather than protein-based catalysis; rejects L-amino acids rather than detecting D-amino acids in the active site. By recycling D-aminoacyl-tRNA to D-amino acids and free tRNA molecules, this enzyme counteracts the toxicity associated with the formation of D-aminoacyl-tRNA entities in vivo and helps enforce protein L-homochirality. The chain is D-aminoacyl-tRNA deacylase from Beutenbergia cavernae (strain ATCC BAA-8 / DSM 12333 / CCUG 43141 / JCM 11478 / NBRC 16432 / NCIMB 13614 / HKI 0122).